A 204-amino-acid polypeptide reads, in one-letter code: Large ribosomal subunit protein eL15 (204 aa).

Belongs to the eukaryotic ribosomal protein eL15 family.

The protein is Large ribosomal subunit protein eL15 (RPL15) of Tetrahymena thermophila (strain SB210).